We begin with the raw amino-acid sequence, 295 residues long: Pyridoxal 5'-phosphate synthase subunit PdxS (295 aa).

Position 23 (D23) interacts with D-ribose 5-phosphate. K80 serves as the catalytic Schiff-base intermediate with D-ribose 5-phosphate. G152 is a binding site for D-ribose 5-phosphate. D-glyceraldehyde 3-phosphate is bound at residue R164. D-ribose 5-phosphate is bound by residues G213 and 234-235 (GS).

The protein belongs to the PdxS/SNZ family. In terms of assembly, in the presence of PdxT, forms a dodecamer of heterodimers.

The enzyme catalyses aldehydo-D-ribose 5-phosphate + D-glyceraldehyde 3-phosphate + L-glutamine = pyridoxal 5'-phosphate + L-glutamate + phosphate + 3 H2O + H(+). Its pathway is cofactor biosynthesis; pyridoxal 5'-phosphate biosynthesis. Functionally, catalyzes the formation of pyridoxal 5'-phosphate from ribose 5-phosphate (RBP), glyceraldehyde 3-phosphate (G3P) and ammonia. The ammonia is provided by the PdxT subunit. Can also use ribulose 5-phosphate and dihydroxyacetone phosphate as substrates, resulting from enzyme-catalyzed isomerization of RBP and G3P, respectively. This Methanosphaera stadtmanae (strain ATCC 43021 / DSM 3091 / JCM 11832 / MCB-3) protein is Pyridoxal 5'-phosphate synthase subunit PdxS.